We begin with the raw amino-acid sequence, 189 residues long: Peptidyl-tRNA hydrolase (189 aa).

Tyr-16 serves as a coordination point for tRNA. His-21 acts as the Proton acceptor in catalysis. Positions 67, 69, and 115 each coordinate tRNA.

It belongs to the PTH family. As to quaternary structure, monomer.

It is found in the cytoplasm. The catalysed reaction is an N-acyl-L-alpha-aminoacyl-tRNA + H2O = an N-acyl-L-amino acid + a tRNA + H(+). Its function is as follows. Hydrolyzes ribosome-free peptidyl-tRNAs (with 1 or more amino acids incorporated), which drop off the ribosome during protein synthesis, or as a result of ribosome stalling. In terms of biological role, catalyzes the release of premature peptidyl moieties from peptidyl-tRNA molecules trapped in stalled 50S ribosomal subunits, and thus maintains levels of free tRNAs and 50S ribosomes. The sequence is that of Peptidyl-tRNA hydrolase from Legionella pneumophila (strain Paris).